Reading from the N-terminus, the 366-residue chain is tRNA/tmRNA (uracil-C(5))-methyltransferase (366 aa).

Positions 190, 218, 223, 239, and 299 each coordinate S-adenosyl-L-methionine. Cys-324 functions as the Nucleophile in the catalytic mechanism. Glu-358 acts as the Proton acceptor in catalysis.

Belongs to the class I-like SAM-binding methyltransferase superfamily. RNA M5U methyltransferase family. TrmA subfamily.

The enzyme catalyses uridine(54) in tRNA + S-adenosyl-L-methionine = 5-methyluridine(54) in tRNA + S-adenosyl-L-homocysteine + H(+). It carries out the reaction uridine(341) in tmRNA + S-adenosyl-L-methionine = 5-methyluridine(341) in tmRNA + S-adenosyl-L-homocysteine + H(+). In terms of biological role, dual-specificity methyltransferase that catalyzes the formation of 5-methyluridine at position 54 (m5U54) in all tRNAs, and that of position 341 (m5U341) in tmRNA (transfer-mRNA). The polypeptide is tRNA/tmRNA (uracil-C(5))-methyltransferase (Klebsiella pneumoniae subsp. pneumoniae (strain ATCC 700721 / MGH 78578)).